The chain runs to 179 residues: Large ribosomal subunit protein uL5 (179 aa).

Belongs to the universal ribosomal protein uL5 family. Part of the 50S ribosomal subunit; part of the 5S rRNA/L5/L18/L25 subcomplex. Contacts the 5S rRNA and the P site tRNA. Forms a bridge to the 30S subunit in the 70S ribosome.

Its function is as follows. This is one of the proteins that bind and probably mediate the attachment of the 5S RNA into the large ribosomal subunit, where it forms part of the central protuberance. In the 70S ribosome it contacts protein S13 of the 30S subunit (bridge B1b), connecting the 2 subunits; this bridge is implicated in subunit movement. Contacts the P site tRNA; the 5S rRNA and some of its associated proteins might help stabilize positioning of ribosome-bound tRNAs. The protein is Large ribosomal subunit protein uL5 of Geobacillus sp. (strain WCH70).